A 157-amino-acid chain; its full sequence is MALHVVLFQPEIPANTGNIARTCAATNTALHLIRPLGFSTDDKMLRRAGLDYWEFVNIHYYDSLDHFFQQNQNGDFYYITKFGKRYYTSYDFSDPSKEIFFIFGRETTGLPKELLAENEDRCLRIPMTENVRALNLSNTAAILVYEALRQQSFHGLS.

S-adenosyl-L-methionine is bound by residues isoleucine 79, glycine 104, and isoleucine 125.

It belongs to the class IV-like SAM-binding methyltransferase superfamily. RNA methyltransferase TrmH family. TrmL subfamily.

It is found in the cytoplasm. It catalyses the reaction cytidine(34) in tRNA + S-adenosyl-L-methionine = 2'-O-methylcytidine(34) in tRNA + S-adenosyl-L-homocysteine + H(+). The enzyme catalyses 5-carboxymethylaminomethyluridine(34) in tRNA(Leu) + S-adenosyl-L-methionine = 5-carboxymethylaminomethyl-2'-O-methyluridine(34) in tRNA(Leu) + S-adenosyl-L-homocysteine + H(+). Could methylate the ribose at the nucleotide 34 wobble position in tRNA. The protein is Putative tRNA (cytidine(34)-2'-O)-methyltransferase of Geobacillus stearothermophilus (Bacillus stearothermophilus).